Here is a 113-residue protein sequence, read N- to C-terminus: MWDPLVNEFPDSVHGLRCMLAIKYLQALEDTYEPSTLGHELVRDLVSVIRARNYVEATRRYHHFHSRIQGSSKTELRQPIQEPCYCPHCPRHKSKTGLGEQAHVQKAHDVQDV.

The disordered stretch occupies residues 94-113 (SKTGLGEQAHVQKAHDVQDV).

Belongs to the geminiviridae protein AV2/V2 family. As to quaternary structure, interacts with host SGS3.

The protein resides in the host cytoplasm. The protein localises to the host perinuclear region. In terms of biological role, through its interaction with host SGS3, acts as a suppressor of RNA-mediated gene silencing, also known as post-transcriptional gene silencing (PTGS), a mechanism of plant viral defense that limits the accumulation of viral RNAs. The protein is Protein AV2 of African cassava mosaic virus (isolate West Kenyan 844) (ACMV).